Reading from the N-terminus, the 701-residue chain is Elongation factor G (701 aa).

One can recognise a tr-type G domain in the interval Ala10–Leu290. GTP contacts are provided by residues Ala19 to Thr26, Asp83 to His87, and Asn137 to Asp140.

This sequence belongs to the TRAFAC class translation factor GTPase superfamily. Classic translation factor GTPase family. EF-G/EF-2 subfamily.

The protein localises to the cytoplasm. In terms of biological role, catalyzes the GTP-dependent ribosomal translocation step during translation elongation. During this step, the ribosome changes from the pre-translocational (PRE) to the post-translocational (POST) state as the newly formed A-site-bound peptidyl-tRNA and P-site-bound deacylated tRNA move to the P and E sites, respectively. Catalyzes the coordinated movement of the two tRNA molecules, the mRNA and conformational changes in the ribosome. The sequence is that of Elongation factor G from Tropheryma whipplei (strain TW08/27) (Whipple's bacillus).